A 612-amino-acid chain; its full sequence is Elongation factor 4 (612 aa).

Positions 11 to 193 constitute a tr-type G domain; that stretch reads KHIRNFSIVA…EIVKKVPAPN (183 aa). GTP contacts are provided by residues 23 to 28 and 140 to 143; these read DHGKST and NKID.

It belongs to the TRAFAC class translation factor GTPase superfamily. Classic translation factor GTPase family. LepA subfamily.

It is found in the cell membrane. The catalysed reaction is GTP + H2O = GDP + phosphate + H(+). Functionally, required for accurate and efficient protein synthesis under certain stress conditions. May act as a fidelity factor of the translation reaction, by catalyzing a one-codon backward translocation of tRNAs on improperly translocated ribosomes. Back-translocation proceeds from a post-translocation (POST) complex to a pre-translocation (PRE) complex, thus giving elongation factor G a second chance to translocate the tRNAs correctly. Binds to ribosomes in a GTP-dependent manner. The polypeptide is Elongation factor 4 (Lactobacillus gasseri (strain ATCC 33323 / DSM 20243 / BCRC 14619 / CIP 102991 / JCM 1131 / KCTC 3163 / NCIMB 11718 / NCTC 13722 / AM63)).